Consider the following 333-residue polypeptide: Ornithine carbamoyltransferase (333 aa).

Residues 56–59 (STRT), Q83, R107, and 134–137 (HPTQ) contribute to the carbamoyl phosphate site. Residues N167, D231, and 235–236 (SM) each bind L-ornithine. Carbamoyl phosphate-binding positions include 273–274 (CL) and R318.

Belongs to the aspartate/ornithine carbamoyltransferase superfamily. OTCase family.

It localises to the cytoplasm. It catalyses the reaction carbamoyl phosphate + L-ornithine = L-citrulline + phosphate + H(+). The protein operates within amino-acid biosynthesis; L-arginine biosynthesis; L-arginine from L-ornithine and carbamoyl phosphate: step 1/3. Its function is as follows. Reversibly catalyzes the transfer of the carbamoyl group from carbamoyl phosphate (CP) to the N(epsilon) atom of ornithine (ORN) to produce L-citrulline. This is Ornithine carbamoyltransferase (argF) from Staphylococcus aureus (strain Mu50 / ATCC 700699).